Reading from the N-terminus, the 714-residue chain is Polyribonucleotide nucleotidyltransferase (714 aa).

Mg(2+)-binding residues include aspartate 488 and aspartate 494. The 60-residue stretch at 555–614 folds into the KH domain; that stretch reads PRIEVMNIPTDKIRDVIGSGGKVIREIVEKTGAKINIEDDGTVKIASSNGKEIEAAKKWI. One can recognise an S1 motif domain in the interval 624 to 692; sequence GEIYEGTVVK…ERGKVRLSMK (69 aa).

The protein belongs to the polyribonucleotide nucleotidyltransferase family. It depends on Mg(2+) as a cofactor.

It localises to the cytoplasm. It carries out the reaction RNA(n+1) + phosphate = RNA(n) + a ribonucleoside 5'-diphosphate. Its function is as follows. Involved in mRNA degradation. Catalyzes the phosphorolysis of single-stranded polyribonucleotides processively in the 3'- to 5'-direction. The sequence is that of Polyribonucleotide nucleotidyltransferase from Brucella melitensis biotype 2 (strain ATCC 23457).